A 235-amino-acid chain; its full sequence is Peptidyl-tRNA hydrolase (235 aa).

A tRNA-binding site is contributed by Tyr14. His19 acts as the Proton acceptor in catalysis. TRNA-binding residues include Phe64, Asn66, and Asn112. A disordered region spans residues 186–235 (RTAPPRSSGGSPKTDKPAKATREPPPAAKPEATPEEETRSPLQRLVDKFR). A compositionally biased stretch (basic and acidic residues) spans 198-207 (KTDKPAKATR).

This sequence belongs to the PTH family. As to quaternary structure, monomer.

The protein resides in the cytoplasm. It carries out the reaction an N-acyl-L-alpha-aminoacyl-tRNA + H2O = an N-acyl-L-amino acid + a tRNA + H(+). Hydrolyzes ribosome-free peptidyl-tRNAs (with 1 or more amino acids incorporated), which drop off the ribosome during protein synthesis, or as a result of ribosome stalling. In terms of biological role, catalyzes the release of premature peptidyl moieties from peptidyl-tRNA molecules trapped in stalled 50S ribosomal subunits, and thus maintains levels of free tRNAs and 50S ribosomes. This Dinoroseobacter shibae (strain DSM 16493 / NCIMB 14021 / DFL 12) protein is Peptidyl-tRNA hydrolase.